A 436-amino-acid polypeptide reads, in one-letter code: Testican-3 (436 aa).

An N-terminal signal peptide occupies residues 1–22 (MLKVSAVLCVCAAAWCSQSLAA). 8 disulfide bridges follow: Cys-90–Cys-101, Cys-95–Cys-111, Cys-139–Cys-169, Cys-142–Cys-162, Cys-151–Cys-183, Cys-317–Cys-341, Cys-352–Cys-359, and Cys-361–Cys-380. Residues 133–185 (GPILSTCKQCPVVYPSPVCGSDGHTYSFQCKLEYQACVLGKQISVKCEGHCPC) form the Kazal-like domain. Positions 314-380 (DPPCQTELSN…GSRINGVADC (67 aa)) constitute a Thyroglobulin type-1 domain. O-linked (Xyl...) (glycosaminoglycan) serine glycans are attached at residues Ser-387 and Ser-392. The interval 393 to 436 (GDFHEWTDDEDDEDDIMNDEDEIEDDDEDEGDDDDGGDDHDGYI) is disordered. Over residues 399 to 430 (TDDEDDEDDIMNDEDEIEDDDEDEGDDDDGGD) the composition is skewed to acidic residues.

Post-translationally, contains chondroitin sulfate and heparan sulfate O-linked oligosaccharides. Expressed in brain.

Its subcellular location is the secreted. The protein resides in the extracellular space. It is found in the extracellular matrix. Its function is as follows. May participate in diverse steps of neurogenesis. Inhibits the processing of pro-matrix metalloproteinase 2 (MMP-2) by MT1-MMP and MT3-MMP. May interfere with tumor invasion. The protein is Testican-3 (SPOCK3) of Pongo abelii (Sumatran orangutan).